A 583-amino-acid polypeptide reads, in one-letter code: Phytoene desaturase (583 aa).

The signal sequence occupies residues 1–20 (MAPPKHVIIIGAGAGGTATA). A helical membrane pass occupies residues 531–551 (IIWFLLIALFAATLVLFIAFP).

This sequence belongs to the carotenoid/retinoid oxidoreductase family. NAD(+) serves as cofactor.

The protein resides in the membrane. The catalysed reaction is 15-cis-phytoene + 5 A = all-trans-3,4-didehydrolycopene + 5 AH2. Its pathway is carotenoid biosynthesis; lycopene biosynthesis. Phytoene desaturase involved in the carotenoid biosynthesis pathway. Converts phytoene into 3,4-didehydrolycopene via the intermediary of phytofluene, zeta-carotene, neurosporene and lycopene, by introducing up to five double bonds into phytoene. This chain is Phytoene desaturase (carB), found in Phycomyces blakesleeanus (strain ATCC 8743b / DSM 1359 / FGSC 10004 / NBRC 33097 / NRRL 1555).